The primary structure comprises 739 residues: Gamma-tubulin complex component 4 homolog (739 aa).

Belongs to the TUBGCP family.

The protein resides in the cytoplasm. Its subcellular location is the cytoskeleton. It localises to the microtubule organizing center. Gamma-tubulin complex is necessary for microtubule nucleation at the microtubule organizing centers (MTOCs). The sequence is that of Gamma-tubulin complex component 4 homolog (85P) from Medicago truncatula (Barrel medic).